A 301-amino-acid chain; its full sequence is Probable actin-related protein 2/3 complex subunit 2 (301 aa).

The protein belongs to the ARPC2 family. Component of the Arp2/3 complex, at least composed of arx-1, arx-2, arx-4 and arx-6.

It is found in the cytoplasm. It localises to the cytoskeleton. Its function is as follows. Functions as actin-binding component of the Arp2/3 complex which is involved in regulation of actin polymerization and together with an activating nucleation-promoting factor (NPF) mediates the formation of branched actin networks. Seems to contact the mother actin filament. Plays a role in time-dependent memory loss and the retention of conditioned behavior over time. The chain is Probable actin-related protein 2/3 complex subunit 2 from Caenorhabditis elegans.